A 91-amino-acid polypeptide reads, in one-letter code: MAASSRAQVLDLYRAMLRESKRFGAYNYRTYAIRRIRDAFRENKNVKDPVEIQALVNKAKRDLGIIRRQVHIGQMYSTDKLVIENQEKPRA.

Pantetheine 4'-phosphate-binding residues include R6 and K44. K47 carries the post-translational modification N6-succinyllysine.

The protein belongs to the complex I LYR family. Homodimer. Component of the mitochondrial core iron-sulfur cluster (ISC) complex composed of NFS1, LYRM4, NDUFAB1, ISCU, FXN, and FDX2; this complex is a heterohexamer containing two copies of each monomer. Component of the cyteine desulfurase complex composed of NFS1, LYRM4 and NDUFAB1; this complex contributes to the stability and cysteine desulfurase activity of NFS1. Interacts with FXN; this interaction is nickel-dependent. Interacts with the cytoplasmic form of NFS1; the complex increases the stability of NFS1. Forms a complex with the cytoplasmic form of NFS1; this complex increases the stability and cysteine desulfurase activity of NFS1. Interacts with NFS1.

It localises to the mitochondrion. Its subcellular location is the nucleus. It functions in the pathway cofactor biosynthesis; iron-sulfur cluster biosynthesis. Its function is as follows. Stabilizing factor, of the core iron-sulfur cluster (ISC) assembly complex, that regulates, in association with NDUFAB1, the stability and the cysteine desulfurase activity of NFS1 and participates in the [2Fe-2S] clusters assembly on the scaffolding protein ISCU. The core iron-sulfur cluster (ISC) assembly complex is involved in the de novo synthesis of a [2Fe-2S] cluster, the first step of the mitochondrial iron-sulfur protein biogenesis. This process is initiated by the cysteine desulfurase complex (NFS1:LYRM4:NDUFAB1) that produces persulfide which is delivered on the scaffold protein ISCU in a FXN-dependent manner. Then this complex is stabilized by FDX2 which provides reducing equivalents to accomplish the [2Fe-2S] cluster assembly. Finally, the [2Fe-2S] cluster is transferred from ISCU to chaperone proteins, including HSCB, HSPA9 and GLRX5. May also participates in the iron-sulfur protein biogenesis in the cytoplasm through its interaction with the cytoplasmic form of NFS1. In Bos taurus (Bovine), this protein is LYR motif-containing protein 4.